Here is a 194-residue protein sequence, read N- to C-terminus: ATP-dependent Clp protease proteolytic subunit (194 aa).

Catalysis depends on Ser98, which acts as the Nucleophile. The active site involves His123.

Belongs to the peptidase S14 family. Fourteen ClpP subunits assemble into 2 heptameric rings which stack back to back to give a disk-like structure with a central cavity, resembling the structure of eukaryotic proteasomes.

It is found in the cytoplasm. The enzyme catalyses Hydrolysis of proteins to small peptides in the presence of ATP and magnesium. alpha-casein is the usual test substrate. In the absence of ATP, only oligopeptides shorter than five residues are hydrolyzed (such as succinyl-Leu-Tyr-|-NHMec, and Leu-Tyr-Leu-|-Tyr-Trp, in which cleavage of the -Tyr-|-Leu- and -Tyr-|-Trp bonds also occurs).. Cleaves peptides in various proteins in a process that requires ATP hydrolysis. Has a chymotrypsin-like activity. Plays a major role in the degradation of misfolded proteins. This is ATP-dependent Clp protease proteolytic subunit from Clostridium kluyveri (strain NBRC 12016).